A 352-amino-acid polypeptide reads, in one-letter code: Cyclin-dependent kinase-like 1 (352 aa).

Residues 4 to 287 (YEKIGKIGEG…CEQLLQHPYF (284 aa)) enclose the Protein kinase domain. ATP-binding positions include 10–18 (IGEGSYGVV) and K33. Residues 45 to 51 (KKIALRE) carry the [NKR]KIAxRE motif. Residue D126 is the Proton acceptor of the active site.

Belongs to the protein kinase superfamily. CMGC Ser/Thr protein kinase family. CDC2/CDKX subfamily.

It localises to the cytoplasm. The protein localises to the nucleus. It catalyses the reaction L-seryl-[protein] + ATP = O-phospho-L-seryl-[protein] + ADP + H(+). The enzyme catalyses L-threonyl-[protein] + ATP = O-phospho-L-threonyl-[protein] + ADP + H(+). The polypeptide is Cyclin-dependent kinase-like 1 (Rattus norvegicus (Rat)).